Here is a 517-residue protein sequence, read N- to C-terminus: Forkhead box protein N4 (517 aa).

The fork-head DNA-binding region spans 193–289 (KPIYSYSCLI…EEMHKWKRKD (97 aa)). Disordered regions lie at residues 365–398 (VQPQ…LPHP) and 497–517 (SGTS…IALL).

It is found in the nucleus. Transcription factor essential for neural and some non-neural tissues development, such as retina and lung respectively. Binds to an 11-bp consensus sequence containing the invariant tetranucleotide 5'-ACGC-3'. During development of the central nervous system, is required to specify the amacrine and horizontal cell fates from multipotent retinal progenitors while suppressing the alternative photoreceptor cell fates through activating DLL4-NOTCH signaling. Also acts synergistically with ASCL1/MASH1 to activate DLL4-NOTCH signaling and drive commitment of p2 progenitors to the V2b interneuron fates during spinal cord neurogenesis. In development of non-neural tissues, plays an essential role in the specification of the atrioventricular canal and is indirectly required for patterning the distal airway during lung development. In Homo sapiens (Human), this protein is Forkhead box protein N4 (FOXN4).